A 130-amino-acid polypeptide reads, in one-letter code: uncharacterized protein (130 aa).

This is an uncharacterized protein from Sputnik virophage.